The primary structure comprises 920 residues: Isoleucine--tRNA ligase (920 aa).

The 'HIGH' region signature appears at 58-68 (PYANGHLHLGH). An L-isoleucyl-5'-AMP-binding site is contributed by E569. Residues 610-614 (KMSKS) carry the 'KMSKS' region motif. K613 contacts ATP. Zn(2+)-binding residues include C895, C898, C910, and C913.

This sequence belongs to the class-I aminoacyl-tRNA synthetase family. IleS type 1 subfamily. As to quaternary structure, monomer. Zn(2+) serves as cofactor.

It localises to the cytoplasm. The catalysed reaction is tRNA(Ile) + L-isoleucine + ATP = L-isoleucyl-tRNA(Ile) + AMP + diphosphate. Its function is as follows. Catalyzes the attachment of isoleucine to tRNA(Ile). As IleRS can inadvertently accommodate and process structurally similar amino acids such as valine, to avoid such errors it has two additional distinct tRNA(Ile)-dependent editing activities. One activity is designated as 'pretransfer' editing and involves the hydrolysis of activated Val-AMP. The other activity is designated 'posttransfer' editing and involves deacylation of mischarged Val-tRNA(Ile). In Helicobacter pylori (strain ATCC 700392 / 26695) (Campylobacter pylori), this protein is Isoleucine--tRNA ligase.